An 815-amino-acid polypeptide reads, in one-letter code: Probable beta-glucosidase G (815 aa).

The signal sequence occupies residues 1–20 (MASIAHLVVSGLLAATAVNG). N-linked (GlcNAc...) asparagine glycans are attached at residues N40, N58, N229, and N276. Residue D304 is part of the active site. N-linked (GlcNAc...) asparagine glycosylation is found at N343, N350, N402, N507, N563, N584, N623, N662, and N715.

The protein belongs to the glycosyl hydrolase 3 family.

Its subcellular location is the secreted. It catalyses the reaction Hydrolysis of terminal, non-reducing beta-D-glucosyl residues with release of beta-D-glucose.. It participates in glycan metabolism; cellulose degradation. In terms of biological role, beta-glucosidases are one of a number of cellulolytic enzymes involved in the degradation of cellulosic biomass. Catalyzes the last step releasing glucose from the inhibitory cellobiose. This Aspergillus flavus (strain ATCC 200026 / FGSC A1120 / IAM 13836 / NRRL 3357 / JCM 12722 / SRRC 167) protein is Probable beta-glucosidase G (bglG).